The chain runs to 430 residues: Glutamate-1-semialdehyde 2,1-aminomutase (430 aa).

An N6-(pyridoxal phosphate)lysine modification is found at lysine 270.

This sequence belongs to the class-III pyridoxal-phosphate-dependent aminotransferase family. HemL subfamily. Homodimer. It depends on pyridoxal 5'-phosphate as a cofactor.

The protein localises to the cytoplasm. The catalysed reaction is (S)-4-amino-5-oxopentanoate = 5-aminolevulinate. It participates in porphyrin-containing compound metabolism; protoporphyrin-IX biosynthesis; 5-aminolevulinate from L-glutamyl-tRNA(Glu): step 2/2. In Cupriavidus necator (strain ATCC 17699 / DSM 428 / KCTC 22496 / NCIMB 10442 / H16 / Stanier 337) (Ralstonia eutropha), this protein is Glutamate-1-semialdehyde 2,1-aminomutase.